The primary structure comprises 275 residues: Apoptosis inhibitor 1 (275 aa).

BIR repeat units follow at residues 24 to 91 and 126 to 193; these read LIER…CVYA and PSAR…CYFV. Residues cysteine 163, cysteine 166, histidine 183, and cysteine 190 each contribute to the Zn(2+) site. An RING-type zinc finger spans residues 227-263; that stretch reads CKVCLERQRDAVLLPCRHFCVCMQCYFALDGKCPTCR.

Its function is as follows. Acts by blocking cellular apoptosis rather than by preventing viral stimulation of apoptosis. The sequence is that of Apoptosis inhibitor 1 (IAP1) from Orgyia pseudotsugata (Douglas-fir tussock moth).